The sequence spans 325 residues: Phosphate acyltransferase (325 aa).

This sequence belongs to the PlsX family. In terms of assembly, homodimer. Probably interacts with PlsY.

The protein resides in the cytoplasm. The catalysed reaction is a fatty acyl-[ACP] + phosphate = an acyl phosphate + holo-[ACP]. It functions in the pathway lipid metabolism; phospholipid metabolism. Functionally, catalyzes the reversible formation of acyl-phosphate (acyl-PO(4)) from acyl-[acyl-carrier-protein] (acyl-ACP). This enzyme utilizes acyl-ACP as fatty acyl donor, but not acyl-CoA. This chain is Phosphate acyltransferase, found in Mycoplasmopsis pulmonis (strain UAB CTIP) (Mycoplasma pulmonis).